Reading from the N-terminus, the 363-residue chain is MTALQNDTFLRALRRQPTEYTPLWLMRQAGRYLPEYNATRARAGSFLGLAKNPAYATEVTLQPLDRYPLDAAILFSDILTVPDAMGLGLSFAQGEGPRFARPLRTEADVQKLAVPDMASLQYVFDAVAEIRRALVQDGRQRVPLIGFSGSPWTLACYMVEGGGSDDFRTVKAMMYGRPDLMHRILDINAQAVSEYLNAQIEAGAQAVMIFDTWGGALADGMYQAFSLAYMRKVLAGLKREHDGQQIPAIVFTKGGGLWLEGLADTGADAIGLDWTVNLAQARRRTGGRVALQGNIDPTVLFAPEAAIREQVRGVLDSYAAAGGSDGHVFNLGHGISQFTPPESVAVLVDEVHRYSRQLRTSQG.

Substrate-binding positions include 27–31, Asp77, Tyr157, Thr212, and His333; that span reads RQAGR.

The protein belongs to the uroporphyrinogen decarboxylase family. In terms of assembly, homodimer.

It localises to the cytoplasm. The catalysed reaction is uroporphyrinogen III + 4 H(+) = coproporphyrinogen III + 4 CO2. Its pathway is porphyrin-containing compound metabolism; protoporphyrin-IX biosynthesis; coproporphyrinogen-III from 5-aminolevulinate: step 4/4. Its function is as follows. Catalyzes the decarboxylation of four acetate groups of uroporphyrinogen-III to yield coproporphyrinogen-III. The chain is Uroporphyrinogen decarboxylase from Cupriavidus pinatubonensis (strain JMP 134 / LMG 1197) (Cupriavidus necator (strain JMP 134)).